Reading from the N-terminus, the 278-residue chain is Indole-3-glycerol phosphate synthase (278 aa).

The protein belongs to the TrpC family.

The catalysed reaction is 1-(2-carboxyphenylamino)-1-deoxy-D-ribulose 5-phosphate + H(+) = (1S,2R)-1-C-(indol-3-yl)glycerol 3-phosphate + CO2 + H2O. It participates in amino-acid biosynthesis; L-tryptophan biosynthesis; L-tryptophan from chorismate: step 4/5. In Pseudomonas aeruginosa (strain LESB58), this protein is Indole-3-glycerol phosphate synthase.